A 24-amino-acid chain; its full sequence is Conotoxin PIVE (24 aa).

3 disulfide bridges follow: cysteine 2–cysteine 10, cysteine 3–cysteine 15, and cysteine 13–cysteine 19. Position 24 is a lysine amide (lysine 24).

The protein belongs to the conotoxin A superfamily. Expressed by the venom duct.

The protein resides in the secreted. Its function is as follows. Probable neurotoxin with ion channel inhibitor activity. In vivo, elicits dose-dependently excitatory activity upon injection into fish. Its action is slowly reversible. The polypeptide is Conotoxin PIVE (Conus purpurascens (Purple cone)).